Consider the following 305-residue polypeptide: UDP-3-O-acyl-N-acetylglucosamine deacetylase (305 aa).

His-79, His-238, and Asp-242 together coordinate Zn(2+). The active-site Proton donor is the His-265.

This sequence belongs to the LpxC family. Requires Zn(2+) as cofactor.

The catalysed reaction is a UDP-3-O-[(3R)-3-hydroxyacyl]-N-acetyl-alpha-D-glucosamine + H2O = a UDP-3-O-[(3R)-3-hydroxyacyl]-alpha-D-glucosamine + acetate. It participates in glycolipid biosynthesis; lipid IV(A) biosynthesis; lipid IV(A) from (3R)-3-hydroxytetradecanoyl-[acyl-carrier-protein] and UDP-N-acetyl-alpha-D-glucosamine: step 2/6. Functionally, catalyzes the hydrolysis of UDP-3-O-myristoyl-N-acetylglucosamine to form UDP-3-O-myristoylglucosamine and acetate, the committed step in lipid A biosynthesis. The protein is UDP-3-O-acyl-N-acetylglucosamine deacetylase of Pectobacterium atrosepticum (strain SCRI 1043 / ATCC BAA-672) (Erwinia carotovora subsp. atroseptica).